A 66-amino-acid polypeptide reads, in one-letter code: Opicalcin-2 (66 aa).

The N-terminal stretch at 1 to 22 is a signal peptide; sequence MKPSLIIVTFIVVFMTISCVAA. Positions 23–31 are excised as a propeptide; it reads DDEQETWIE. Disulfide bonds link cysteine 36/cysteine 50, cysteine 43/cysteine 54, and cysteine 49/cysteine 65. Positions 55 to 57 are essential for stimulation of [3H]ryanodine binding to RYR1; sequence KRR.

It belongs to the scorpion calcin family. In terms of tissue distribution, expressed by the venom gland.

It localises to the secreted. This toxin stabilizes ryanodine receptor 1 (RyR1) opening in a long-lasting subconductance state (40% of the full conductance state). Furthermore, it triggers calcium release from sarcoplasmic vesicles (64.2 nM are enough to induce a sharp release, and 50% of the total calcium is released after toxin (100 nM) addition) probably by acting as a cell-penetrating peptide (CPP). In addition, it has been shown to dose-dependently stimulate ryanodine binding to RyR1 (EC(50)=3.2 nM). It also augments the bell-shaped calcium-[3H]ryanodine binding curve that is maximal at about 10 uM calcium concentration. It binds a different site as ryanodine. It acts synergistically with caffeine. In vivo, intracerebroventricular injection into mice induces neurotoxic symptoms, followed by death. This is Opicalcin-2 from Opistophthalmus carinatus (African yellow leg scorpion).